The following is a 188-amino-acid chain: Pyridoxal 5'-phosphate synthase subunit PdxT (188 aa).

An L-glutamine-binding site is contributed by 47 to 49 (GES). C79 (nucleophile) is an active-site residue. L-glutamine is bound by residues R106 and 134–135 (IR). Catalysis depends on charge relay system residues H169 and E171.

It belongs to the glutaminase PdxT/SNO family. In terms of assembly, in the presence of PdxS, forms a dodecamer of heterodimers. Only shows activity in the heterodimer.

The enzyme catalyses aldehydo-D-ribose 5-phosphate + D-glyceraldehyde 3-phosphate + L-glutamine = pyridoxal 5'-phosphate + L-glutamate + phosphate + 3 H2O + H(+). It catalyses the reaction L-glutamine + H2O = L-glutamate + NH4(+). The protein operates within cofactor biosynthesis; pyridoxal 5'-phosphate biosynthesis. Catalyzes the hydrolysis of glutamine to glutamate and ammonia as part of the biosynthesis of pyridoxal 5'-phosphate. The resulting ammonia molecule is channeled to the active site of PdxS. The chain is Pyridoxal 5'-phosphate synthase subunit PdxT from Caldicellulosiruptor bescii (strain ATCC BAA-1888 / DSM 6725 / KCTC 15123 / Z-1320) (Anaerocellum thermophilum).